The following is a 266-amino-acid chain: Pyrrolizixenacetamide deacetylase (266 aa).

An acetate-binding site is contributed by threonine 28. Residue serine 94 is the Nucleophile of the active site. Leucine 95 provides a ligand contact to acetate. Catalysis depends on charge relay system residues aspartate 215 and histidine 242. Histidine 242 serves as a coordination point for acetate.

Belongs to the AB hydrolase superfamily. As to quaternary structure, homodimer.

The enzyme catalyses pyrrolizixenacetamide + H2O = 3-amino-5,6,7,7a-tetrahydro-1H-pyrrolizin-1-one + acetate + H(+). Its function is as follows. Involved in the biosynthetic pathway of pyrrolizwilline, a pyrrolizidine alkaloid. Catalyzes the N-deacetylation of pyrrolizixenacetamide. The chain is Pyrrolizixenacetamide deacetylase from Xenorhabdus hominickii.